The chain runs to 208 residues: Thymidylate kinase (208 aa).

10–17 (GIDGCGKT) contributes to the ATP binding site.

This sequence belongs to the thymidylate kinase family.

It carries out the reaction dTMP + ATP = dTDP + ADP. Phosphorylation of dTMP to form dTDP in both de novo and salvage pathways of dTTP synthesis. The polypeptide is Thymidylate kinase (Caldanaerobacter subterraneus subsp. tengcongensis (strain DSM 15242 / JCM 11007 / NBRC 100824 / MB4) (Thermoanaerobacter tengcongensis)).